We begin with the raw amino-acid sequence, 358 residues long: tRNA-specific 2-thiouridylase MnmA (358 aa).

ATP-binding positions include Ala6–Ser13 and Met32. Residue Cys103 is the Nucleophile of the active site. The cysteines at positions 103 and 201 are disulfide-linked. Residue Gly127 participates in ATP binding. Residues Lys151–Gln153 form an interaction with tRNA region. The active-site Cysteine persulfide intermediate is Cys201.

This sequence belongs to the MnmA/TRMU family.

It localises to the cytoplasm. The catalysed reaction is S-sulfanyl-L-cysteinyl-[protein] + uridine(34) in tRNA + AH2 + ATP = 2-thiouridine(34) in tRNA + L-cysteinyl-[protein] + A + AMP + diphosphate + H(+). Its function is as follows. Catalyzes the 2-thiolation of uridine at the wobble position (U34) of tRNA, leading to the formation of s(2)U34. This is tRNA-specific 2-thiouridylase MnmA from Thermotoga sp. (strain RQ2).